We begin with the raw amino-acid sequence, 340 residues long: UDP-glucose 4-epimerase (340 aa).

Residues 16–17, 37–42, 60–61, 82–86, serine 127, tyrosine 154, lysine 158, and phenylalanine 182 contribute to the NAD(+) site; these read YI, IDNNKN, DL, and FAAKT. Positions 127 and 154 each coordinate substrate. The Proton acceptor role is filled by tyrosine 154. Substrate-binding positions include asparagine 183, 199 to 200, 216 to 218, arginine 231, and 295 to 298; these read TL, FLY, and RSWD.

Belongs to the NAD(P)-dependent epimerase/dehydratase family. As to quaternary structure, homodimer. Requires NAD(+) as cofactor.

It carries out the reaction UDP-alpha-D-glucose = UDP-alpha-D-galactose. It participates in carbohydrate metabolism; galactose metabolism. Its function is as follows. Involved in the metabolism of galactose. Catalyzes the conversion of UDP-galactose (UDP-Gal) to UDP-glucose (UDP-Glc) through a mechanism involving the transient reduction of NAD. This is UDP-glucose 4-epimerase (galE) from Mycoplasma genitalium (strain ATCC 33530 / DSM 19775 / NCTC 10195 / G37) (Mycoplasmoides genitalium).